We begin with the raw amino-acid sequence, 151 residues long: Protein ripply1 (151 aa).

The WRPW motif motif lies at 57–60; sequence WRPW. The tract at residues 96-131 is ripply homology domain; it reads HPVRLFWPKSRSFDYLYSAGEILLQNFPVQATINLY. The interval 130-151 is disordered; that stretch reads LYEDSDSEEEEEDEEQEDEEEK. The segment covering 132–151 has biased composition (acidic residues); the sequence is EDSDSEEEEEDEEQEDEEEK.

It belongs to the ripply family.

The protein localises to the nucleus. In terms of biological role, plays a role in somitogenesis. Essential for transcriptional repression of the segmental patterning genes, thus terminating the segmentation program in the presomitic mesoderm, and also required for the maintenance of rostrocaudal polarity in somites. The sequence is that of Protein ripply1 from Homo sapiens (Human).